Reading from the N-terminus, the 235-residue chain is RNA pyrophosphohydrolase (235 aa).

The 144-residue stretch at 6–149 folds into the Nudix hydrolase domain; sequence GFRPNVGIIL…KREVYQLALS (144 aa). The Nudix box motif lies at 38-59; that stretch reads GGIKYGETPEQAMFRELHEEVG. Positions 161–235 are disordered; sequence APLSPYGRGG…PDDTAPKDNS (75 aa). Residues 171–196 are compositionally biased toward basic and acidic residues; sequence QHRERDGRDARDSRERSSDQGGRNEQ. The segment covering 203–220 has biased composition (low complexity); sequence TVTTTTVIVETVSVSAPT.

It belongs to the Nudix hydrolase family. RppH subfamily. A divalent metal cation is required as a cofactor.

Accelerates the degradation of transcripts by removing pyrophosphate from the 5'-end of triphosphorylated RNA, leading to a more labile monophosphorylated state that can stimulate subsequent ribonuclease cleavage. This Ralstonia pickettii (strain 12J) protein is RNA pyrophosphohydrolase.